Consider the following 230-residue polypeptide: 5'-methylthioadenosine/S-adenosylhomocysteine nucleosidase (230 aa).

The active-site Proton acceptor is the Glu12. Residues Gly78, Ile153, and 174–175 (ME) each bind substrate. Asp198 acts as the Proton donor in catalysis.

It belongs to the PNP/UDP phosphorylase family. MtnN subfamily.

It catalyses the reaction S-adenosyl-L-homocysteine + H2O = S-(5-deoxy-D-ribos-5-yl)-L-homocysteine + adenine. The catalysed reaction is S-methyl-5'-thioadenosine + H2O = 5-(methylsulfanyl)-D-ribose + adenine. It carries out the reaction 5'-deoxyadenosine + H2O = 5-deoxy-D-ribose + adenine. It functions in the pathway amino-acid biosynthesis; L-methionine biosynthesis via salvage pathway; S-methyl-5-thio-alpha-D-ribose 1-phosphate from S-methyl-5'-thioadenosine (hydrolase route): step 1/2. Its function is as follows. Catalyzes the irreversible cleavage of the glycosidic bond in both 5'-methylthioadenosine (MTA) and S-adenosylhomocysteine (SAH/AdoHcy) to adenine and the corresponding thioribose, 5'-methylthioribose and S-ribosylhomocysteine, respectively. Also cleaves 5'-deoxyadenosine, a toxic by-product of radical S-adenosylmethionine (SAM) enzymes, into 5-deoxyribose and adenine. The sequence is that of 5'-methylthioadenosine/S-adenosylhomocysteine nucleosidase from Shewanella denitrificans (strain OS217 / ATCC BAA-1090 / DSM 15013).